Reading from the N-terminus, the 397-residue chain is uncharacterized protein (397 aa).

Disordered regions lie at residues 159–203 (LNSS…KSTI) and 221–397 (NSVK…KTKN). Residues 221-240 (NSVKSSPSKSFVSISSPVQS) show a composition bias toward low complexity. 2 stretches are compositionally biased toward polar residues: residues 285–309 (TSTLDASSSNTSLASTGPMTVSSST) and 320–330 (VNPNSTSSVTF). Positions 342–371 (CSRCKKSKKGCDRQRPCGRCRDAGLNSEDC) form a DNA-binding region, zn(2)-C6 fungal-type. A compositionally biased stretch (basic and acidic residues) spans 350–363 (KGCDRQRPCGRCRD). Residues 383–397 (RKPRGRGRGRPKTKN) are compositionally biased toward basic residues.

It localises to the nucleus. This is an uncharacterized protein from Schizosaccharomyces pombe (strain 972 / ATCC 24843) (Fission yeast).